We begin with the raw amino-acid sequence, 548 residues long: Membrane protein insertase YidC (548 aa).

The helical transmembrane segment at 6-26 (NLFLIAFLFVSFMIWQAWQTD) threads the bilayer. The disordered stretch occupies residues 30-53 (QPLQTQTTQNTTSAAGDAVNQGVP). 4 helical membrane passes run 345-365 (KFLH…TFIV), 420-440 (LGGC…YYML), 458-478 (LAAQ…MFFI), and 499-519 (PVIF…YYIV).

The protein belongs to the OXA1/ALB3/YidC family. Type 1 subfamily. Interacts with the Sec translocase complex via SecD. Specifically interacts with transmembrane segments of nascent integral membrane proteins during membrane integration.

It localises to the cell inner membrane. Required for the insertion and/or proper folding and/or complex formation of integral membrane proteins into the membrane. Involved in integration of membrane proteins that insert both dependently and independently of the Sec translocase complex, as well as at least some lipoproteins. Aids folding of multispanning membrane proteins. The polypeptide is Membrane protein insertase YidC (Erwinia tasmaniensis (strain DSM 17950 / CFBP 7177 / CIP 109463 / NCPPB 4357 / Et1/99)).